Consider the following 634-residue polypeptide: Ankyrin repeat and SOCS box protein 2 (634 aa).

Positions 26 to 45 (SEEELVQMAIEQSLADKTRG) constitute a UIM domain. A disordered region spans residues 35 to 81 (IEQSLADKTRGPTPAETSVSSQTNHQPGHIHPWTRSSSPPESPPARA). Over residues 49-60 (AETSVSSQTNHQ) the composition is skewed to polar residues. ANK repeat units follow at residues 104–133 (AAMD…NLAE), 137–167 (EGWL…TIDQ), 171–200 (QEET…EPDI), 204–233 (SRET…DANH), 237–266 (RGWT…KVEA), 270–299 (YSIT…DINT), 303–332 (DSAS…DANK), 336–365 (DGLL…RTRV), 368–397 (SGIS…DVNT), 410–439 (RRTS…DPNR), 440–469 (DVIS…NIDA), and 476–504 (TAFP…DGEP). Ser-371 is subject to Phosphoserine. The SOCS box domain occupies 580–634 (EDWAVIKEKAEPPRPLAHLCRLRVRKAIGKYRIKLLDTLPLPGRLIRYLKYENTQ).

The protein belongs to the ankyrin SOCS box (ASB) family. Component of a probable ECS E3 ubiquitin-protein ligase complex which contains CUL5, either RBX1 or RNF7/RBX2, Elongin BC complex (ELOB and ELOC) and ASB2. Interacts with SKP2. Through its interaction with SKP2, likely to bridge the formation of dimeric E3-ubiquitin-protein ligase complexes composed of an ECS complex and an SCF(SKP2) complex. Interacts with JAK2; the interaction targets JAK2 for Notch-mediated proteasomal degradation. Interacts with TCF3/E2A; the interaction is mediated by SKP2 and targets TCF3 for Notch-mediated proteasomal degradation. Interacts with DES. Monoubiquitinated.

It localises to the cytoplasm. The protein localises to the cytoskeleton. It is found in the stress fiber. The protein resides in the myofibril. Its subcellular location is the sarcomere. It localises to the z line. It participates in protein modification; protein ubiquitination. In terms of biological role, substrate-recognition component of a SCF-like ECS (Elongin-Cullin-SOCS-box protein) E3 ubiquitin-protein ligase complex which mediates the ubiquitination and subsequent proteasomal degradation of target proteins. Mediates Notch-induced ubiquitination and degradation of substrates including E2A and JAK2. Required during embryonic heart development for complete heart looping. Required for cardiomyocyte differentiation. Involved in myogenic differentiation and targets filamin FLNB for proteasomal degradation but not filamin FLNA. Also targets DES for proteasomal degradation. Acts as a negative regulator of skeletal muscle mass. In Rattus norvegicus (Rat), this protein is Ankyrin repeat and SOCS box protein 2.